The primary structure comprises 291 residues: Diaminopimelate epimerase (291 aa).

Substrate contacts are provided by N11 and N78. The Proton donor role is filled by C87. Substrate-binding positions include 88–89 (GN), N166, N200, and 218–219 (ER). Catalysis depends on C227, which acts as the Proton acceptor. Residue 228 to 229 (GT) coordinates substrate.

This sequence belongs to the diaminopimelate epimerase family. In terms of assembly, homodimer.

It localises to the cytoplasm. It carries out the reaction (2S,6S)-2,6-diaminopimelate = meso-2,6-diaminopimelate. The protein operates within amino-acid biosynthesis; L-lysine biosynthesis via DAP pathway; DL-2,6-diaminopimelate from LL-2,6-diaminopimelate: step 1/1. In terms of biological role, catalyzes the stereoinversion of LL-2,6-diaminopimelate (L,L-DAP) to meso-diaminopimelate (meso-DAP), a precursor of L-lysine and an essential component of the bacterial peptidoglycan. This Mycolicibacterium smegmatis (strain ATCC 700084 / mc(2)155) (Mycobacterium smegmatis) protein is Diaminopimelate epimerase.